The sequence spans 442 residues: 5'-deoxyadenosine deaminase (442 aa).

Residues histidine 72 and histidine 74 each coordinate Zn(2+). Positions 101 and 193 each coordinate substrate. Zn(2+) is bound at residue histidine 220. Positions 223 and 309 each coordinate substrate. Aspartate 309 is a binding site for Zn(2+).

Belongs to the metallo-dependent hydrolases superfamily. MTA/SAH deaminase family. As to quaternary structure, homotetramer. Requires Zn(2+) as cofactor.

The catalysed reaction is 5'-deoxyadenosine + H2O + H(+) = 5'-deoxyinosine + NH4(+). The enzyme catalyses S-adenosyl-L-homocysteine + H2O + H(+) = S-inosyl-L-homocysteine + NH4(+). It catalyses the reaction S-methyl-5'-thioadenosine + H2O + H(+) = S-methyl-5'-thioinosine + NH4(+). It carries out the reaction adenosine + H2O + H(+) = inosine + NH4(+). The protein operates within amino-acid biosynthesis; S-adenosyl-L-methionine biosynthesis. Catalyzes the deamination of three SAM-derived enzymatic products, namely 5'-deoxyadenosine, S-adenosyl-L-homocysteine, and 5'-methylthioadenosine, to produce the inosine analogs. Can also deaminate adenosine. The preferred substrate for this enzyme is 5'-deoxyadenosine, but all these substrates are efficiently deaminated. Likely functions in a S-adenosyl-L-methionine (SAM) recycling pathway from S-adenosyl-L-homocysteine (SAH) produced from SAM-dependent methylation reactions. May also be involved in the recycling of 5'-deoxyadenosine, whereupon the 5'-deoxyribose moiety of 5'-deoxyinosine is further metabolized to deoxyhexoses used for the biosynthesis of aromatic amino acids in methanogens. This is 5'-deoxyadenosine deaminase from Methanoregula boonei (strain DSM 21154 / JCM 14090 / 6A8).